Reading from the N-terminus, the 209-residue chain is 3-demethoxyubiquinol 3-hydroxylase (209 aa).

Fe cation is bound by residues Glu-58, Glu-88, His-91, Glu-140, Glu-172, and His-175.

The protein belongs to the COQ7 family. The cofactor is Fe cation.

The protein resides in the cell membrane. It carries out the reaction a 5-methoxy-2-methyl-3-(all-trans-polyprenyl)benzene-1,4-diol + AH2 + O2 = a 3-demethylubiquinol + A + H2O. The protein operates within cofactor biosynthesis; ubiquinone biosynthesis. Functionally, catalyzes the hydroxylation of 2-nonaprenyl-3-methyl-6-methoxy-1,4-benzoquinol during ubiquinone biosynthesis. The sequence is that of 3-demethoxyubiquinol 3-hydroxylase from Polaromonas naphthalenivorans (strain CJ2).